The primary structure comprises 328 residues: D-cysteine desulfhydrase (328 aa).

Position 51 is an N6-(pyridoxal phosphate)lysine (K51).

The protein belongs to the ACC deaminase/D-cysteine desulfhydrase family. In terms of assembly, homodimer. It depends on pyridoxal 5'-phosphate as a cofactor.

The enzyme catalyses D-cysteine + H2O = hydrogen sulfide + pyruvate + NH4(+) + H(+). In terms of biological role, catalyzes the alpha,beta-elimination reaction of D-cysteine and of several D-cysteine derivatives. It could be a defense mechanism against D-cysteine. The chain is D-cysteine desulfhydrase from Salmonella paratyphi C (strain RKS4594).